We begin with the raw amino-acid sequence, 312 residues long: Ribonuclease Z (312 aa).

Zn(2+) contacts are provided by His-62, His-64, Asp-66, His-67, His-139, Asp-210, and His-268. Residue Asp-66 is the Proton acceptor of the active site.

This sequence belongs to the RNase Z family. Homodimer. The cofactor is Zn(2+).

It carries out the reaction Endonucleolytic cleavage of RNA, removing extra 3' nucleotides from tRNA precursor, generating 3' termini of tRNAs. A 3'-hydroxy group is left at the tRNA terminus and a 5'-phosphoryl group is left at the trailer molecule.. Functionally, zinc phosphodiesterase, which displays some tRNA 3'-processing endonuclease activity. Probably involved in tRNA maturation, by removing a 3'-trailer from precursor tRNA. The chain is Ribonuclease Z from Crocosphaera subtropica (strain ATCC 51142 / BH68) (Cyanothece sp. (strain ATCC 51142)).